We begin with the raw amino-acid sequence, 120 residues long: Ribonuclease P protein component (120 aa).

Belongs to the RnpA family. As to quaternary structure, consists of a catalytic RNA component (M1 or rnpB) and a protein subunit.

The enzyme catalyses Endonucleolytic cleavage of RNA, removing 5'-extranucleotides from tRNA precursor.. In terms of biological role, RNaseP catalyzes the removal of the 5'-leader sequence from pre-tRNA to produce the mature 5'-terminus. It can also cleave other RNA substrates such as 4.5S RNA. The protein component plays an auxiliary but essential role in vivo by binding to the 5'-leader sequence and broadening the substrate specificity of the ribozyme. This is Ribonuclease P protein component from Desulfotalea psychrophila (strain LSv54 / DSM 12343).